A 214-amino-acid chain; its full sequence is ATP-dependent Clp protease proteolytic subunit 2 (214 aa).

Ser110 serves as the catalytic Nucleophile. The active site involves His135.

This sequence belongs to the peptidase S14 family. In terms of assembly, fourteen ClpP subunits assemble into 2 heptameric rings which stack back to back to give a disk-like structure with a central cavity, resembling the structure of eukaryotic proteasomes.

The protein localises to the cytoplasm. It catalyses the reaction Hydrolysis of proteins to small peptides in the presence of ATP and magnesium. alpha-casein is the usual test substrate. In the absence of ATP, only oligopeptides shorter than five residues are hydrolyzed (such as succinyl-Leu-Tyr-|-NHMec, and Leu-Tyr-Leu-|-Tyr-Trp, in which cleavage of the -Tyr-|-Leu- and -Tyr-|-Trp bonds also occurs).. Its function is as follows. Cleaves peptides in various proteins in a process that requires ATP hydrolysis. Has a chymotrypsin-like activity. Plays a major role in the degradation of misfolded proteins. The chain is ATP-dependent Clp protease proteolytic subunit 2 from Mycobacterium bovis (strain ATCC BAA-935 / AF2122/97).